The chain runs to 554 residues: MSEAEARPTNFIRQIIDEDLASGKHTTVHTRFPPEPNGYLHIGHAKSICLNFGIAQDYKGQCNLRFDDTNPVKEDIEYVESIKNDVEWLGFHWSGNVRYSSDYFDQLHAYAIELINKGLAYVDELTPEQIREYRGTLTQPGKNSPYRDRSVEENLALFEKMRAGGFEEGKACLRAKIDMASPFIVMRDPVLYRIKFAEHHQTGNKWCIYPMYDFTHCISDALEGITHSLCTLEFQDNRRLYDWVLDNITIPVHPRQYEFSRLNLEYTVMSKRKLNLLVTDKHVEGWDDPRMPTISGLRRRGYTAASIREFCKRIGVTRQDNTIEMASLESCIREDLNENAPRAMAVIDPVKLVIENYQGEGEMVTMPNHPNKPEMGSRQVPFSSEIWIDRADFREEANKQYKRLVLGKEVRLRNAYVIKAERVEKDAEGNITTIFCTYDADTLSKDPADGRKVKGVIHWVSAAHALPVEIRLYDRLFSVPNPGAADDFLSVINPESLVIKQGFAEPSLKDAVAGKAFQFEREGYFCLDSRHSTAEKPVFNRTVGLRDTWAKVGE.

The 'HIGH' region motif lies at 34 to 44; that stretch reads PEPNGYLHIGH. ATP contacts are provided by residues 35-37 and 41-47; these read EPN and HIGHAKS. L-glutamine-binding residues include Asp67 and Tyr212. Residues Thr231, 261 to 262, and 269 to 271 each bind ATP; these read RL and MSK. Residues 268-272 carry the 'KMSKS' region motif; that stretch reads VMSKR.

This sequence belongs to the class-I aminoacyl-tRNA synthetase family. Monomer.

The protein localises to the cytoplasm. The catalysed reaction is tRNA(Gln) + L-glutamine + ATP = L-glutaminyl-tRNA(Gln) + AMP + diphosphate. This is Glutamine--tRNA ligase from Shigella boydii serotype 4 (strain Sb227).